Here is a 152-residue protein sequence, read N- to C-terminus: Small ribosomal subunit protein uS8m (152 aa).

This sequence belongs to the universal ribosomal protein uS8 family.

It localises to the mitochondrion. The sequence is that of Small ribosomal subunit protein uS8m (RPS8) from Marchantia polymorpha (Common liverwort).